We begin with the raw amino-acid sequence, 232 residues long: 5'-methylthioadenosine/S-adenosylhomocysteine nucleosidase (232 aa).

E12 serves as the catalytic Proton acceptor. Residues G78, M153, and 174–175 (ME) each bind substrate. D198 functions as the Proton donor in the catalytic mechanism.

Belongs to the PNP/UDP phosphorylase family. MtnN subfamily.

It carries out the reaction S-adenosyl-L-homocysteine + H2O = S-(5-deoxy-D-ribos-5-yl)-L-homocysteine + adenine. The enzyme catalyses S-methyl-5'-thioadenosine + H2O = 5-(methylsulfanyl)-D-ribose + adenine. The catalysed reaction is 5'-deoxyadenosine + H2O = 5-deoxy-D-ribose + adenine. The protein operates within amino-acid biosynthesis; L-methionine biosynthesis via salvage pathway; S-methyl-5-thio-alpha-D-ribose 1-phosphate from S-methyl-5'-thioadenosine (hydrolase route): step 1/2. Its function is as follows. Catalyzes the irreversible cleavage of the glycosidic bond in both 5'-methylthioadenosine (MTA) and S-adenosylhomocysteine (SAH/AdoHcy) to adenine and the corresponding thioribose, 5'-methylthioribose and S-ribosylhomocysteine, respectively. Also cleaves 5'-deoxyadenosine, a toxic by-product of radical S-adenosylmethionine (SAM) enzymes, into 5-deoxyribose and adenine. The protein is 5'-methylthioadenosine/S-adenosylhomocysteine nucleosidase of Anoxybacillus flavithermus (strain DSM 21510 / WK1).